The primary structure comprises 433 residues: Sensor protein RstB (433 aa).

The Cytoplasmic portion of the chain corresponds to 1–3; it reads MKK. A helical transmembrane segment spans residues 4 to 24; that stretch reads LFIQFYLLLFVCFLVMSLLVG. The Periplasmic portion of the chain corresponds to 25 to 135; sequence LVYKFTAERA…PYLYYLHQMR (111 aa). Residues 136–156 form a helical membrane-spanning segment; the sequence is LLDIALIAFIAISLAFPVFIW. Topologically, residues 157–433 are cytoplasmic; that stretch reads MRPHWQDMLK…WHNIPQFTSA (277 aa). Residues 158 to 210 form the HAMP domain; it reads RPHWQDMLKLEAAAQRFGDGHLNERIHFDEGSSFERLGVAFNQMADNINALIA. A Histidine kinase domain is found at 218 to 425; it reads GIAHELRTPL…RFSFSWPLWH (208 aa). The residue at position 276 (His276) is a Phosphohistidine; by autocatalysis.

Autophosphorylated.

Its subcellular location is the cell inner membrane. It catalyses the reaction ATP + protein L-histidine = ADP + protein N-phospho-L-histidine.. Its function is as follows. Member of the two-component regulatory system RstB/RstA. RstB functions as a membrane-associated protein kinase that phosphorylates RstA. This chain is Sensor protein RstB (rstB), found in Escherichia coli (strain K12).